The following is a 300-amino-acid chain: Endonuclease III-like protein 1 (300 aa).

A mitochondrion-targeting transit peptide spans M1–A19. Residues M1–H53 are disordered. Over residues G22–R37 the composition is skewed to basic and acidic residues. Residues K38–K51 are compositionally biased toward basic residues. The HhH domain maps to R187–H211. K208 functions as the Nucleophile; for N-glycosylase activity in the catalytic mechanism. [4Fe-4S] cluster is bound by residues C278, C285, C288, and C294.

It belongs to the Nth/MutY family. Interacts with YBX1. Interacts with ERCC5/XPG; the interaction stimulates NTHL1 activity and NTHL1 binding to its DNA substrate. The cofactor is [4Fe-4S] cluster. Ubiquitinated by TRIM26; leading to proteasomal degradation. In terms of tissue distribution, widely expressed.

Its subcellular location is the nucleus. The protein resides in the mitochondrion. The enzyme catalyses 2'-deoxyribonucleotide-(2'-deoxyribose 5'-phosphate)-2'-deoxyribonucleotide-DNA = a 3'-end 2'-deoxyribonucleotide-(2,3-dehydro-2,3-deoxyribose 5'-phosphate)-DNA + a 5'-end 5'-phospho-2'-deoxyribonucleoside-DNA + H(+). Its function is as follows. Bifunctional DNA N-glycosylase with associated apurinic/apyrimidinic (AP) lyase function that catalyzes the first step in base excision repair (BER), the primary repair pathway for the repair of oxidative DNA damage. The DNA N-glycosylase activity releases the damaged DNA base from DNA by cleaving the N-glycosidic bond, leaving an AP site. The AP lyase activity cleaves the phosphodiester bond 3' to the AP site by a beta-elimination. Primarily recognizes and repairs oxidative base damage of pyrimidines. The sequence is that of Endonuclease III-like protein 1 (Nthl1) from Mus musculus (Mouse).